A 337-amino-acid chain; its full sequence is Palmitoyltransferase ZDHHC15 (337 aa).

Topologically, residues M1–L20 are cytoplasmic. A helical transmembrane segment spans residues S21–F41. Over E42–I56 the chain is Lumenal. Residues Y57–F77 form a helical membrane-spanning segment. Residues T78–K172 lie on the Cytoplasmic side of the membrane. The 51-residue stretch at R129–A179 folds into the DHHC domain. C131, C134, H144, C145, C148, C151, and H158 together coordinate Zn(2+). C159 (S-palmitoyl cysteine intermediate) is an active-site residue. C165 contributes to the Zn(2+) binding site. Residues F173–F193 traverse the membrane as a helical segment. Topologically, residues S194–K210 are lumenal. Residues F211–H234 form a helical membrane-spanning segment. Topologically, residues C235–T337 are cytoplasmic. The interval P306 to T337 is disordered. Residues E312–D323 are compositionally biased toward acidic residues. Over residues G327–T337 the composition is skewed to polar residues.

The protein belongs to the DHHC palmitoyltransferase family. In terms of processing, autopalmitoylated (in vitro). Expressed in placenta, liver, lung, kidney, heart and brain.

The protein localises to the golgi apparatus membrane. It localises to the postsynaptic density. The enzyme catalyses L-cysteinyl-[protein] + hexadecanoyl-CoA = S-hexadecanoyl-L-cysteinyl-[protein] + CoA. It carries out the reaction L-cysteinyl-[protein] + tetradecanoyl-CoA = S-tetradecanoyl-L-cysteinyl-[protein] + CoA. It catalyses the reaction L-cysteinyl-[protein] + octadecanoyl-CoA = S-octadecanoyl-L-cysteinyl-[protein] + CoA. Its function is as follows. Palmitoyltransferase that catalyzes the addition of palmitate onto various protein substrates. Has no stringent fatty acid selectivity and in addition to palmitate can also transfer onto target proteins myristate from tetradecanoyl-CoA and stearate from octadecanoyl-CoA. Palmitoylates IGF2R and SORT1, promoting their partitioning to an endosomal membrane subdomain where they can interact with the retromer cargo-selective complex. Thereby, regulates retrograde transport from endosomes to the Golgi apparatus of these lysosomal sorting receptors and plays a role in trafficking of lysosomal proteins. In the nervous system, catalyzes the palmitoylation of DLG4/PSD95 and regulates its synaptic clustering and function in synaptogenesis. Could be involved in the differentiation of dopaminergic neurons and the development of the diencephalon. Could also catalyze the palmitoylation of GAP43. Could also palmitoylate DNAJC5 and regulate its localization to the Golgi membrane. Could also palmitoylate FYN as shown in vitro. May palmitoylate CALHM3 subunit of gustatory voltage-gated ion channels and modulate channel gating and kinetics. The protein is Palmitoyltransferase ZDHHC15 of Homo sapiens (Human).